We begin with the raw amino-acid sequence, 445 residues long: Tubulin beta-2A chain (445 aa).

An MREI motif motif is present at residues 1–4 (MREI). Gln-11 is a GTP binding site. Ser-40 is subject to Phosphoserine. Position 58 is an N6-acetyllysine; alternate (Lys-58). Residue Lys-58 is modified to N6-succinyllysine; alternate. Residue Lys-58 forms a Glycyl lysine isopeptide (Lys-Gly) (interchain with G-Cter in ubiquitin); alternate linkage. GTP contacts are provided by Glu-69, Ser-138, Gly-142, Thr-143, and Gly-144. Residue Glu-69 participates in Mg(2+) binding. Residue Ser-172 is modified to Phosphoserine; by CDK1. Asn-204 and Asn-226 together coordinate GTP. Phosphothreonine is present on residues Thr-285 and Thr-290. Arg-318 carries the post-translational modification Omega-N-methylarginine. A Glycyl lysine isopeptide (Lys-Gly) (interchain with G-Cter in ubiquitin) cross-link involves residue Lys-324. Residues 422 to 445 (YQQYQDATADEQGEFEEEEGEDEA) are disordered. A compositionally biased stretch (acidic residues) spans 429 to 445 (TADEQGEFEEEEGEDEA). Glu-438 bears the 5-glutamyl polyglutamate mark.

This sequence belongs to the tubulin family. Interacts with ZNRF1. Part of a complex composed at least of ASH2L, EMSY, HCFC1, HSPA8, CCAR2, MATR3, MKI67, RBBP5, TUBB2A, WDR5 and ZNF335; this complex may have a histone H3-specific methyltransferase activity. Dimer of alpha and beta chains. A typical microtubule is a hollow water-filled tube with an outer diameter of 25 nm and an inner diameter of 15 nM. Alpha-beta heterodimers associate head-to-tail to form protofilaments running lengthwise along the microtubule wall with the beta-tubulin subunit facing the microtubule plus end conferring a structural polarity. Microtubules usually have 13 protofilaments but different protofilament numbers can be found in some organisms and specialized cells. Mg(2+) is required as a cofactor. Post-translationally, some glutamate residues at the C-terminus are polyglutamylated, resulting in polyglutamate chains on the gamma-carboxyl group. Polyglutamylation plays a key role in microtubule severing by spastin (SPAST). SPAST preferentially recognizes and acts on microtubules decorated with short polyglutamate tails: severing activity by SPAST increases as the number of glutamates per tubulin rises from one to eight, but decreases beyond this glutamylation threshold. Glutamylation is also involved in cilia motility. In terms of processing, some glutamate residues at the C-terminus are monoglycylated but not polyglycylated due to the absence of functional TTLL10 in human. Monoglycylation is mainly limited to tubulin incorporated into cilia and flagella axonemes, which is required for their stability and maintenance. Flagella glycylation controls sperm motility. Both polyglutamylation and monoglycylation can coexist on the same protein on adjacent residues, and lowering glycylation levels increases polyglutamylation, and reciprocally. Phosphorylated on Ser-172 by CDK1 during the cell cycle, from metaphase to telophase, but not in interphase. This phosphorylation inhibits tubulin incorporation into microtubules. High expression in brain, where it represents 30% of all beta-tubulins.

It is found in the cytoplasm. It localises to the cytoskeleton. Functionally, tubulin is the major constituent of microtubules, a cylinder consisting of laterally associated linear protofilaments composed of alpha- and beta-tubulin heterodimers. Microtubules grow by the addition of GTP-tubulin dimers to the microtubule end, where a stabilizing cap forms. Below the cap, tubulin dimers are in GDP-bound state, owing to GTPase activity of alpha-tubulin. The protein is Tubulin beta-2A chain (TUBB2A) of Homo sapiens (Human).